A 309-amino-acid polypeptide reads, in one-letter code: Homoserine kinase (309 aa).

91-101 (PIGSGLGSSAC) provides a ligand contact to ATP.

This sequence belongs to the GHMP kinase family. Homoserine kinase subfamily.

The protein localises to the cytoplasm. The enzyme catalyses L-homoserine + ATP = O-phospho-L-homoserine + ADP + H(+). The protein operates within amino-acid biosynthesis; L-threonine biosynthesis; L-threonine from L-aspartate: step 4/5. In terms of biological role, catalyzes the ATP-dependent phosphorylation of L-homoserine to L-homoserine phosphate. This chain is Homoserine kinase, found in Pectobacterium carotovorum subsp. carotovorum (strain PC1).